A 319-amino-acid polypeptide reads, in one-letter code: Ficolin-2 (319 aa).

The N-terminal stretch at 1 to 22 (MVLGSAALFVLSLCVTELTLHA) is a signal peptide. Positions 45–101 (GCPGLPGALGPKGEAGAKGDRGESGLPGHPGKAGPTGPKGDRGEKGVRGEKGDTGPS) constitute a Collagen-like domain. Residues 53–106 (LGPKGEAGAKGDRGESGLPGHPGKAGPTGPKGDRGEKGVRGEKGDTGPSQSCAT) are disordered. The span at 83-97 (KGDRGEKGVRGEKGD) shows a compositional bias: basic and acidic residues. One can recognise a Fibrinogen C-terminal domain in the interval 102-319 (QSCATGPRTC…KVSEMKVRLI (218 aa)). 2 disulfides stabilise this stretch: Cys-104-Cys-132 and Cys-111-Cys-139. Residues Asp-255, Asp-257, and Ser-261 each coordinate Ca(2+). An intrachain disulfide couples Cys-263 to Cys-276. A glycan (N-linked (GlcNAc...) asparagine) is linked at Asn-306.

Belongs to the ficolin lectin family. Homotrimer. Interacts with elastin. Interacts with MASP1 and MASP2.

It localises to the secreted. Its function is as follows. May function in innate immunity through activation of the lectin complement pathway. Calcium-dependent and GlcNAc-binding lectin. The sequence is that of Ficolin-2 (Fcn2) from Rattus norvegicus (Rat).